A 115-amino-acid polypeptide reads, in one-letter code: Ribonuclease P protein component 4 (115 aa).

Cys66, Cys69, Cys96, and Cys99 together coordinate Zn(2+).

This sequence belongs to the eukaryotic/archaeal RNase P protein component 4 family. In terms of assembly, consists of a catalytic RNA component and at least 4-5 protein subunits. The cofactor is Zn(2+).

The protein resides in the cytoplasm. It catalyses the reaction Endonucleolytic cleavage of RNA, removing 5'-extranucleotides from tRNA precursor.. Part of ribonuclease P, a protein complex that generates mature tRNA molecules by cleaving their 5'-ends. The protein is Ribonuclease P protein component 4 of Hyperthermus butylicus (strain DSM 5456 / JCM 9403 / PLM1-5).